Reading from the N-terminus, the 298-residue chain is Protease HtpX homolog (298 aa).

2 helical membrane-spanning segments follow: residues 14–34 (VVLLVVFFALLALIGASAGYL) and 39–59 (YAMGLVLALVIGVIYATSMIF). His143 contributes to the Zn(2+) binding site. The active site involves Glu144. Residue His147 coordinates Zn(2+). 2 consecutive transmembrane segments (helical) span residues 158–178 (IAVALASAVTVISSIGGRMLW) and 197–217 (IITLLLSLLSLLLAPLVASLI). Residue Glu226 participates in Zn(2+) binding.

It belongs to the peptidase M48B family. Zn(2+) serves as cofactor.

Its subcellular location is the cell membrane. This is Protease HtpX homolog from Streptococcus pyogenes serotype M28 (strain MGAS6180).